The following is a 90-amino-acid chain: Probable Fe(2+)-trafficking protein (90 aa).

Belongs to the Fe(2+)-trafficking protein family.

Functionally, could be a mediator in iron transactions between iron acquisition and iron-requiring processes, such as synthesis and/or repair of Fe-S clusters in biosynthetic enzymes. The chain is Probable Fe(2+)-trafficking protein from Vibrio atlanticus (strain LGP32) (Vibrio splendidus (strain Mel32)).